Consider the following 672-residue polypeptide: Acetoacetyl-CoA synthetase (672 aa).

The protein belongs to the ATP-dependent AMP-binding enzyme family. In terms of tissue distribution, abundant in male subcutaneous white adipose tissue after weaning. In white adipose tissue, it is preferentially detected in mature adipocytes but not in preadipocytes. The expression in primary preadipocytes increases during the adipocyte differentiation. In brain, it is expressed in the midbrain, pons/medulla, cerebral cortex, hippocampus and cerebellum. The expression in the cerebellum is restricted primarily to glial cells, while in the cerebral cortex, it is restricted to neuronal cells.

The protein resides in the cytoplasm. The protein localises to the cytosol. The catalysed reaction is acetoacetate + ATP + CoA = acetoacetyl-CoA + AMP + diphosphate. In terms of biological role, converts acetoacetate to acetoacetyl-CoA in the cytosol. Ketone body-utilizing enzyme, responsible for the synthesis of cholesterol and fatty acids. This Rattus norvegicus (Rat) protein is Acetoacetyl-CoA synthetase (Aacs).